Consider the following 77-residue polypeptide: Acyl carrier protein (77 aa).

The 76-residue stretch at 2–77 (SDIADRVKKI…DAVKFIQGAV (76 aa)) folds into the Carrier domain. Ser37 is subject to O-(pantetheine 4'-phosphoryl)serine.

This sequence belongs to the acyl carrier protein (ACP) family. 4'-phosphopantetheine is transferred from CoA to a specific serine of apo-ACP by AcpS. This modification is essential for activity because fatty acids are bound in thioester linkage to the sulfhydryl of the prosthetic group.

The protein localises to the cytoplasm. Its pathway is lipid metabolism; fatty acid biosynthesis. In terms of biological role, carrier of the growing fatty acid chain in fatty acid biosynthesis. The protein is Acyl carrier protein of Paracoccus denitrificans (strain Pd 1222).